The chain runs to 491 residues: Keratin, type II microfibrillar, component 7C (491 aa).

At cysteine 1 the chain carries Blocked amino end (Cys). The head stretch occupies residues 1-109; the sequence is CGFSTVGSGF…PNAQCVKQEE (109 aa). Positions 109–420 constitute an IF rod domain; it reads EKEQIKCLNN…RLLEGEEQRL (312 aa). Residues 110 to 144 form a coil 1A region; it reads KEQIKCLNNRFAAFIDKVRFLEQQNKLLETKLQFF. A linker 1 region spans residues 145–154; that stretch reads QNRQCCESNL. The interval 155 to 255 is coil 1B; it reads EPLFEGYIET…YQEEIRVLQA (101 aa). The interval 256-272 is linker 12; that stretch reads NISDTSVIVKMDNSRDL. The tract at residues 273 to 416 is coil 2; it reads NMDCIVAEIK…ATYRRLLEGE (144 aa). The interval 417-491 is tail; sequence EQRLCEGVGA…GGGSCSLGRC (75 aa).

The protein belongs to the intermediate filament family.

Wool microfibrillar keratin. The sequence is that of Keratin, type II microfibrillar, component 7C from Ovis aries (Sheep).